Here is a 1449-residue protein sequence, read N- to C-terminus: Spike glycoprotein (1449 aa).

An N-terminal signal peptide occupies residues 1 to 28 (MKKLFVVLVVMPLIYGDNFPCSKLTNRT). S1 regions lie at residues 17 to 776 (DNFP…FYYY) and 29 to 776 (IGNH…FYYY). Over 29–1390 (IGNHWNLIET…NRIETYVKWP (1362 aa)) the chain is Virion surface. Residues 657 to 801 (VIYEEGDNIV…DSNDVDCEPV (145 aa)) form an interaction with host ANPEP region. Residues 777–1449 (SIYNYTNDMT…YEPIEKVHIH (673 aa)) are S2. A fusion peptide region spans residues 1022-1043 (AGGITLGALGGGAVAIPFAVAV). A heptad repeat 1 (HR1) region spans residues 1037–1156 (IPFAVAVQAR…HVDRLITGRL (120 aa)). 2 coiled-coil regions span residues 1104–1148 (QDVV…DAHV) and 1338–1380 (TYLN…LEWL). Positions 1305-1402 (PDYIDINQTV…VWLLIGLVVI (98 aa)) are heptad repeat 2 (HR2). The helical transmembrane segment at 1391-1410 (WYVWLLIGLVVIFCIPLLLF) threads the bilayer. The Intravirion portion of the chain corresponds to 1411 to 1449 (CCCSTGCCGCIGCLGSCCHSICSRRQFENYEPIEKVHIH). Positions 1445–1449 (KVHIH) match the KxHxx motif.

The protein belongs to the alphacoronaviruses spike protein family. As to quaternary structure, homotrimer. During virus morphogenesis, found in a complex with M and HE proteins. Interacts with host ANPEP.

The protein localises to the virion membrane. It localises to the host endoplasmic reticulum-Golgi intermediate compartment membrane. Functionally, S1 region attaches the virion to the cell membrane by interacting with host ANPEP/aminopeptidase N, initiating the infection. Binding to the receptor probably induces conformational changes in the S glycoprotein unmasking the fusion peptide of S2 region and activating membranes fusion. S2 region belongs to the class I viral fusion protein. Under the current model, the protein has at least 3 conformational states: pre-fusion native state, pre-hairpin intermediate state, and post-fusion hairpin state. During viral and target cell membrane fusion, the coiled coil regions (heptad repeats) regions assume a trimer-of-hairpins structure, positioning the fusion peptide in close proximity to the C-terminal region of the ectodomain. The formation of this structure appears to drive apposition and subsequent fusion of viral and target cell membranes. In Porcine transmissible gastroenteritis coronavirus (strain FS772/70) (TGEV), this protein is Spike glycoprotein.